The sequence spans 122 residues: Large ribosomal subunit protein uL14c (122 aa).

It belongs to the universal ribosomal protein uL14 family. In terms of assembly, part of the 50S ribosomal subunit.

It localises to the plastid. The protein localises to the chloroplast. Its function is as follows. Binds to 23S rRNA. The polypeptide is Large ribosomal subunit protein uL14c (Tupiella akineta (Green alga)).